Here is a 515-residue protein sequence, read N- to C-terminus: Fatty acyl-CoA reductase 1 (515 aa).

Over 1-465 (MLSIPEFYQG…ARKHLNKLRN (465 aa)) the chain is Cytoplasmic. A helical membrane pass occupies residues 466–484 (IRYGFNTILVVLIWRVFIA). Topologically, residues 485–515 (RSQMARNIWYFVVSMCFKFLSYFRASSTMRY) are peroxisomal.

Belongs to the fatty acyl-CoA reductase family.

It localises to the peroxisome membrane. The enzyme catalyses a long-chain fatty acyl-CoA + 2 NADPH + 2 H(+) = a long-chain primary fatty alcohol + 2 NADP(+) + CoA. The catalysed reaction is hexadecanoyl-CoA + 2 NADPH + 2 H(+) = hexadecan-1-ol + 2 NADP(+) + CoA. It carries out the reaction octadecanoyl-CoA + 2 NADPH + 2 H(+) = octadecan-1-ol + 2 NADP(+) + CoA. It catalyses the reaction (9Z)-octadecenoyl-CoA + 2 NADPH + 2 H(+) = (9Z)-octadecen-1-ol + 2 NADP(+) + CoA. The enzyme catalyses (9Z,12Z)-octadecadienoyl-CoA + 2 NADPH + 2 H(+) = (9Z,12Z)-octadecadien-1-ol + 2 NADP(+) + CoA. The catalysed reaction is eicosanoyl-CoA + 2 NADPH + 2 H(+) = eicosan-1-ol + 2 NADP(+) + CoA. It carries out the reaction 16-methylheptadecanoyl-CoA + 2 NADPH + 2 H(+) = 16-methylheptadecan-1-ol + 2 NADP(+) + CoA. It catalyses the reaction 18-methylnonadecanoyl-CoA + 2 NADPH + 2 H(+) = 18-methylnonadecan-1-ol + 2 NADP(+) + CoA. Its function is as follows. Catalyzes the reduction of saturated and unsaturated C16 or C18 fatty acyl-CoA to fatty alcohols. It plays an essential role in the production of ether lipids/plasmalogens which synthesis requires fatty alcohols. In parallel, it is also required for wax monoesters production since fatty alcohols also constitute a substrate for their synthesis. The chain is Fatty acyl-CoA reductase 1 (far1) from Xenopus laevis (African clawed frog).